We begin with the raw amino-acid sequence, 22 residues long: Cytin chain B (22 aa).

The protein belongs to the protease inhibitor I13 (potato type I serine protease inhibitor) family. In terms of assembly, heterodimer of an A chain and a B chain, linked by a disulfide bond.

Its function is as follows. Inhibitor of chymotrypsin. The chain is Cytin chain B from Theromyzon tessulatum (Duck leech).